Reading from the N-terminus, the 188-residue chain is Phosphatidylinositol N-acetylglucosaminyltransferase subunit H (188 aa).

This sequence belongs to the PIGH family. In terms of assembly, component of the glycosylphosphatidylinositol-N-acetylglucosaminyltransferase (GPI-GnT) complex composed at least by PIGA, PIGC, PIGH, PIGP, PIGQ, PIGY and DPM2. Interacts with PIGQ.

The protein localises to the cytoplasm. Its pathway is glycolipid biosynthesis; glycosylphosphatidylinositol-anchor biosynthesis. In terms of biological role, part of the glycosylphosphatidylinositol-N-acetylglucosaminyltransferase (GPI-GnT) complex that catalyzes the transfer of N-acetylglucosamine from UDP-N-acetylglucosamine to phosphatidylinositol and participates in the first step of GPI biosynthesis. The protein is Phosphatidylinositol N-acetylglucosaminyltransferase subunit H of Homo sapiens (Human).